Reading from the N-terminus, the 399-residue chain is Acetate kinase (399 aa).

N10 provides a ligand contact to Mg(2+). K17 is a binding site for ATP. A substrate-binding site is contributed by R91. D148 acts as the Proton donor/acceptor in catalysis. ATP is bound by residues 208-212 (HLGNG), 283-285 (DCR), and 331-335 (GIGEN). E385 contributes to the Mg(2+) binding site.

Belongs to the acetokinase family. As to quaternary structure, homodimer. The cofactor is Mg(2+). It depends on Mn(2+) as a cofactor.

Its subcellular location is the cytoplasm. The catalysed reaction is acetate + ATP = acetyl phosphate + ADP. It participates in metabolic intermediate biosynthesis; acetyl-CoA biosynthesis; acetyl-CoA from acetate: step 1/2. Catalyzes the formation of acetyl phosphate from acetate and ATP. Can also catalyze the reverse reaction. The sequence is that of Acetate kinase from Shewanella oneidensis (strain ATCC 700550 / JCM 31522 / CIP 106686 / LMG 19005 / NCIMB 14063 / MR-1).